The sequence spans 199 residues: Adenine phosphoribosyltransferase (199 aa).

Belongs to the purine/pyrimidine phosphoribosyltransferase family. As to quaternary structure, homodimer.

It localises to the cytoplasm. It carries out the reaction AMP + diphosphate = 5-phospho-alpha-D-ribose 1-diphosphate + adenine. It functions in the pathway purine metabolism; AMP biosynthesis via salvage pathway; AMP from adenine: step 1/1. Its function is as follows. Catalyzes a salvage reaction resulting in the formation of AMP, that is energically less costly than de novo synthesis. The protein is Adenine phosphoribosyltransferase of Rhodopseudomonas palustris (strain BisB18).